A 285-amino-acid polypeptide reads, in one-letter code: Bark agglutinin I polypeptide A (285 aa).

Positions 1–31 (MTSYNFKTQTSFPLLLSISFFFLLLLNKVNS) are cleaved as a signal peptide. Residue asparagine 147 is glycosylated (N-linked (GlcNAc...) asparagine). Mn(2+)-binding residues include glutamate 156 and aspartate 158. Ca(2+) is bound by residues aspartate 158, phenylalanine 160, asparagine 162, and aspartate 166. 2 residues coordinate Mn(2+): aspartate 166 and histidine 171. An N-linked (GlcNAc...) asparagine glycan is attached at asparagine 188.

The protein belongs to the leguminous lectin family. In terms of assembly, RPbAI is composed of two polypeptides, A and B, that associate into five different tetrameric isolectins. The A4 combination is the only one devoid of agglutination activity. Isoform B4 displays maximal agglutination activity. In terms of tissue distribution, strong expression in seed. Lower levels in the flower, and the bark of the roots. No expression in leaf. The lectin accumulates in the inner bark in autumn.

Its function is as follows. N-acetyl-D-galactosamine specific lectin. Bark lectins are storage protein that probably maintains stocks of nitrogen during dormant period. Self-aggregatable molecules that can bind their own carbohydrate side chains. They could also play a role in the plant's defense against phytophagous invertebrates or herbivorous higher animals. The chain is Bark agglutinin I polypeptide A from Robinia pseudoacacia (Black locust).